The following is a 299-amino-acid chain: ATP phosphoribosyltransferase (299 aa).

Belongs to the ATP phosphoribosyltransferase family. Long subfamily. Requires Mg(2+) as cofactor.

It is found in the cytoplasm. The enzyme catalyses 1-(5-phospho-beta-D-ribosyl)-ATP + diphosphate = 5-phospho-alpha-D-ribose 1-diphosphate + ATP. It participates in amino-acid biosynthesis; L-histidine biosynthesis; L-histidine from 5-phospho-alpha-D-ribose 1-diphosphate: step 1/9. Feedback inhibited by histidine. In terms of biological role, catalyzes the condensation of ATP and 5-phosphoribose 1-diphosphate to form N'-(5'-phosphoribosyl)-ATP (PR-ATP). Has a crucial role in the pathway because the rate of histidine biosynthesis seems to be controlled primarily by regulation of HisG enzymatic activity. The chain is ATP phosphoribosyltransferase from Shewanella oneidensis (strain ATCC 700550 / JCM 31522 / CIP 106686 / LMG 19005 / NCIMB 14063 / MR-1).